The primary structure comprises 319 residues: MSLNFLDFEQPIAELEAKIDSLTAVSRQDEKLDINIDEEVHRLREKSVELTRKIFADLGAWQIAQLARHPQRPYTLDYVRLAFDEFDELAGDRAYADDKAIVGGIARLDGRPVMIIGHQKGRETKEKIRRNFGMPAPEGYRKALRLMQMAERFKMPIITFIDTPGAYPGVGAEERGQSEAIARNLREMSRLGVPVVCTVIGEGGSGGALAIGVGDKVNMLQYSTYSVISPEGCASILWKSADKAPLAAEAMGIIAPRLKELKLIDSIIPEPLGGAHRNPEAMAASLKAQLLADLADLDVLSTEDLKNRRYQRLMSYGYA.

One can recognise a CoA carboxyltransferase C-terminal domain in the interval 35–296 (NIDEEVHRLR…KAQLLADLAD (262 aa)).

This sequence belongs to the AccA family. As to quaternary structure, acetyl-CoA carboxylase is a heterohexamer composed of biotin carboxyl carrier protein (AccB), biotin carboxylase (AccC) and two subunits each of ACCase subunit alpha (AccA) and ACCase subunit beta (AccD).

The protein resides in the cytoplasm. It carries out the reaction N(6)-carboxybiotinyl-L-lysyl-[protein] + acetyl-CoA = N(6)-biotinyl-L-lysyl-[protein] + malonyl-CoA. It functions in the pathway lipid metabolism; malonyl-CoA biosynthesis; malonyl-CoA from acetyl-CoA: step 1/1. Functionally, component of the acetyl coenzyme A carboxylase (ACC) complex. First, biotin carboxylase catalyzes the carboxylation of biotin on its carrier protein (BCCP) and then the CO(2) group is transferred by the carboxyltransferase to acetyl-CoA to form malonyl-CoA. The chain is Acetyl-coenzyme A carboxylase carboxyl transferase subunit alpha from Escherichia coli O139:H28 (strain E24377A / ETEC).